A 730-amino-acid polypeptide reads, in one-letter code: Exostosin-1a (730 aa).

The Cytoplasmic portion of the chain corresponds to 1–6 (MQAKKR). A helical; Signal-anchor for type II membrane protein transmembrane segment spans residues 7–27 (YLILFSAGVCLILLFYLQGPA). Topologically, residues 28–730 (SRRTPKRGDD…RKKYRDIERL (703 aa)) are lumenal. An N-linked (GlcNAc...) asparagine glycan is attached at N314. The UDP-N-acetyl-alpha-D-glucosamine site is built by R533, D549, E550, D551, E637, D638, and R685. A Mn(2+)-binding site is contributed by D551. An intrachain disulfide couples C636 to C688. The active site involves D638.

The protein belongs to the glycosyltransferase 47 family. Mn(2+) is required as a cofactor.

The protein resides in the endoplasmic reticulum membrane. The enzyme catalyses 3-O-{[(1-&gt;4)-beta-D-GlcA-(1-&gt;4)-alpha-D-GlcNAc](n)-(1-&gt;4)-beta-D-GlcA-(1-&gt;3)-beta-D-Gal-(1-&gt;3)-beta-D-Gal-(1-&gt;4)-beta-D-Xyl}-L-seryl-[protein] + UDP-N-acetyl-alpha-D-glucosamine = 3-O-{alpha-D-GlcNAc-[(1-&gt;4)-beta-D-GlcA-(1-&gt;4)-alpha-D-GlcNAc](n)-(1-&gt;4)-beta-D-GlcA-(1-&gt;3)-beta-D-Gal-(1-&gt;3)-beta-D-Gal-(1-&gt;4)-beta-D-Xyl}-L-seryl-[protein] + UDP + H(+). It carries out the reaction 3-O-{alpha-D-GlcNAc-[(1-&gt;4)-beta-D-GlcA-(1-&gt;4)-alpha-D-GlcNAc](n)-(1-&gt;4)-beta-D-GlcA-(1-&gt;3)-beta-D-Gal-(1-&gt;3)-beta-D-Gal-(1-&gt;4)-beta-D-Xyl}-L-seryl-[protein] + UDP-alpha-D-glucuronate = 3-O-{[(1-&gt;4)-beta-D-GlcA-(1-&gt;4)-alpha-D-GlcNAc](n+1)-(1-&gt;4)-beta-D-GlcA-(1-&gt;3)-beta-D-Gal-(1-&gt;3)-beta-D-Gal-(1-&gt;4)-beta-D-Xyl}-L-seryl-[protein] + UDP + H(+). It participates in protein modification; protein glycosylation. In terms of biological role, glycosyltransferase required for the biosynthesis of heparan-sulfate. In Danio rerio (Zebrafish), this protein is Exostosin-1a (ext1a).